A 121-amino-acid chain; its full sequence is Small ribosomal subunit protein bS6 (121 aa).

The interval 96–121 (DTGPSSMMKTVEREDARKTQQAEYQA) is disordered. The segment covering 105–115 (TVEREDARKTQ) has biased composition (basic and acidic residues).

The protein belongs to the bacterial ribosomal protein bS6 family.

Functionally, binds together with bS18 to 16S ribosomal RNA. The sequence is that of Small ribosomal subunit protein bS6 from Albidiferax ferrireducens (strain ATCC BAA-621 / DSM 15236 / T118) (Rhodoferax ferrireducens).